A 326-amino-acid chain; its full sequence is Interleukin-1-binding protein (326 aa).

The N-terminal stretch at 1–18 is a signal peptide; sequence MSILPVIFLSIFFYSSFV. 3 consecutive Ig-like domains span residues 24 to 115, 122 to 212, and 221 to 322; these read PECI…LNLT, SNID…RIVK, and PSTM…KTVT. Residues Cys48 and Cys99 are joined by a disulfide bond. Residues Asn80, Asn103, and Asn113 are each glycosylated (N-linked (GlcNAc...) asparagine; by host). Cys143 and Cys194 are oxidised to a cystine. Residues Asn206 and Asn237 are each glycosylated (N-linked (GlcNAc...) asparagine; by host). An intrachain disulfide couples Cys242 to Cys309.

The protein belongs to the interleukin-1 receptor family. In terms of assembly, interacts with mouse Il1b.

The protein resides in the secreted. In terms of biological role, may reduce the host inflammatory response by interacting with inteleukin-1 beta (Il1b) and thus decreasing the association between IL1B and its cellular receptor. In Vaccinia virus (strain Western Reserve) (VACV), this protein is Interleukin-1-binding protein (OPG201).